The sequence spans 411 residues: uncharacterized protein (411 aa).

It belongs to the peptidase M20 family.

This is an uncharacterized protein from Haemophilus influenzae (strain ATCC 51907 / DSM 11121 / KW20 / Rd).